The chain runs to 65 residues: Sperm protamine P1 (65 aa).

The interval 1 to 65 (MARYRHSRSR…RYSRRRRRRY (65 aa)) is disordered.

This sequence belongs to the protamine P1 family. In terms of tissue distribution, testis.

The protein localises to the nucleus. Its subcellular location is the chromosome. Functionally, protamines substitute for histones in the chromatin of sperm during the haploid phase of spermatogenesis. They compact sperm DNA into a highly condensed, stable and inactive complex. The sequence is that of Sperm protamine P1 (PRM1) from Lagorchestes hirsutus (Rufous hare-wallaby).